Consider the following 225-residue polypeptide: 3-dehydroquinate dehydratase (225 aa).

3-dehydroquinate is bound by residues Ser-6, 30–32 (EWR), and Arg-62. His-118 functions as the Proton donor/acceptor in the catalytic mechanism. Lys-143 acts as the Schiff-base intermediate with substrate in catalysis. 3 residues coordinate 3-dehydroquinate: Arg-186, Thr-205, and Gln-209.

It belongs to the type-I 3-dehydroquinase family. Homodimer.

It catalyses the reaction 3-dehydroquinate = 3-dehydroshikimate + H2O. The protein operates within metabolic intermediate biosynthesis; chorismate biosynthesis; chorismate from D-erythrose 4-phosphate and phosphoenolpyruvate: step 3/7. In terms of biological role, involved in the third step of the chorismate pathway, which leads to the biosynthesis of aromatic amino acids. Catalyzes the cis-dehydration of 3-dehydroquinate (DHQ) and introduces the first double bond of the aromatic ring to yield 3-dehydroshikimate. The polypeptide is 3-dehydroquinate dehydratase (Streptococcus gordonii (strain Challis / ATCC 35105 / BCRC 15272 / CH1 / DL1 / V288)).